The sequence spans 479 residues: Cardiolipin synthase A (479 aa).

Helical transmembrane passes span 8–28 (FFGY…IHAL) and 38–58 (IAWA…YLVF). PLD phosphodiesterase domains are found at residues 218–245 (INFR…GDEY) and 392–419 (EPGF…DNRS). Active-site residues include His-223, Lys-225, Asp-230, His-397, Lys-399, and Asp-404.

It belongs to the phospholipase D family. Cardiolipin synthase subfamily. ClsA sub-subfamily.

The protein localises to the cell inner membrane. It catalyses the reaction 2 a 1,2-diacyl-sn-glycero-3-phospho-(1'-sn-glycerol) = a cardiolipin + glycerol. In terms of biological role, catalyzes the reversible phosphatidyl group transfer from one phosphatidylglycerol molecule to another to form cardiolipin (CL) (diphosphatidylglycerol) and glycerol. This Pseudomonas syringae pv. syringae (strain B728a) protein is Cardiolipin synthase A.